The following is a 393-amino-acid chain: NAD(P)H-quinone oxidoreductase subunit H, chloroplastic (393 aa).

Belongs to the complex I 49 kDa subunit family. In terms of assembly, NDH is composed of at least 16 different subunits, 5 of which are encoded in the nucleus.

The protein resides in the plastid. Its subcellular location is the chloroplast thylakoid membrane. It carries out the reaction a plastoquinone + NADH + (n+1) H(+)(in) = a plastoquinol + NAD(+) + n H(+)(out). The enzyme catalyses a plastoquinone + NADPH + (n+1) H(+)(in) = a plastoquinol + NADP(+) + n H(+)(out). In terms of biological role, NDH shuttles electrons from NAD(P)H:plastoquinone, via FMN and iron-sulfur (Fe-S) centers, to quinones in the photosynthetic chain and possibly in a chloroplast respiratory chain. The immediate electron acceptor for the enzyme in this species is believed to be plastoquinone. Couples the redox reaction to proton translocation, and thus conserves the redox energy in a proton gradient. This Liriodendron tulipifera (Tuliptree) protein is NAD(P)H-quinone oxidoreductase subunit H, chloroplastic.